Here is a 574-residue protein sequence, read N- to C-terminus: Protein OBERON 2 (574 aa).

Composition is skewed to polar residues over residues 1–10 (MGTSSGSNHP) and 65–76 (SMSQKTEPDSME). Residues 1–76 (MGTSSGSNHP…SQKTEPDSME (76 aa)) form a disordered region. The PHD-type zinc-finger motif lies at 226 to 291 (LCMCTICNKF…VFKCRACNRT (66 aa)). Residues 416–524 (KKARMALETC…LFEKIKLQEN (109 aa)) are a coiled coil.

As to quaternary structure, self-interacts. Interacts with OBE1, OBE3 and OBE4. Binds to VPg of pea seed borne mosaic virus (PSbMV), turnip mosaic virus (TuMV) and lettuce mosaic virus (LMV), but not with VPg of tobacco etch virus (TEV), cowpea mosaic virus (CPMV), tomato black ring virus (TBRV) and grapevine fan leaf virus (GFLV). In terms of tissue distribution, expressed in roots, seedlings, stems, leaves, flowers and siliques, especially in the vasculature.

It localises to the nucleus. Functionally, probable transcription factor that acts together with OBE1 for the maintenance and/or establishment of both the shoot and root meristems, probably by controlling the expression of the meristem genes such as WUS, PLT1 and PLT2 and of genes required for auxin responses. Promotes cell meristematic activity via the WUSCHEL-CLAVATA pathway. Involved in the development of the basal pole and in auxin-mediated root and vascular development in the embryo. Confers sensitivity to turnip mosaic virus (TuMV) probably by promoting viral movement and multiplication via interaction with TuMV VPg. The protein is Protein OBERON 2 of Arabidopsis thaliana (Mouse-ear cress).